The chain runs to 404 residues: uncharacterized protein (404 aa).

The next 12 membrane-spanning stretches (helical) occupy residues 16 to 36, 49 to 69, 79 to 99, 110 to 130, 133 to 153, 166 to 186, 221 to 241, 252 to 272, 283 to 303, 307 to 327, 342 to 362, and 364 to 384; these read FAFFAAGFNTFAILYCVQPLM, AASLSLSVTTMLLAVSMLVFG, PIMGISMLAASVLCLASAFSP, IQGVALAGLPSIAMAYLGEEI, GSLGSAMGLYISGNAIGAVFG, WHMAMGTIGVISLIASVIFFI, FLIGFLLLGSNVALFNYIVYV, AFSSWIFIVMIVGIFSSSFIG, ILVMNIFIVIAGALFTINNML, ILGIALFTFGFFGGHSVASSW, LYLFFYYAGSSVFGTIGGLFW, and GFHWLGVVGMITFMLLVALWL.

The protein belongs to the major facilitator superfamily.

The protein localises to the cell membrane. This is an uncharacterized protein from Bacillus subtilis (strain 168).